The sequence spans 1081 residues: Isoleucine--tRNA ligase (1081 aa).

A 'HIGH' region motif is present at residues 53–63 (PFATGLPHYGN). The short motif at 607–611 (KMSKS) is the 'KMSKS' region element. Lysine 610 is a binding site for ATP.

The protein belongs to the class-I aminoacyl-tRNA synthetase family.

It catalyses the reaction tRNA(Ile) + L-isoleucine + ATP = L-isoleucyl-tRNA(Ile) + AMP + diphosphate. This chain is Isoleucine--tRNA ligase (ILSA), found in Tetrahymena thermophila.